The sequence spans 275 residues: Phosphite import ATP-binding protein PxtA (275 aa).

An ABC transporter domain is found at 11 to 252 (LRVDRLSVVY…QLERIYAGRS (242 aa)). 44–51 (GLSGAGKS) provides a ligand contact to ATP. Positions 251-275 (RSTTQPANAPAEPPVMLEPSLEMSR) are disordered.

This sequence belongs to the ABC transporter superfamily. Phosphonates importer (TC 3.A.1.9.1) family. In terms of assembly, the complex is composed of two ATP-binding proteins (PtxA), two transmembrane proteins (PtxC) and a solute-binding protein (PtxB).

It is found in the cell inner membrane. It catalyses the reaction phosphite(out) + ATP + H2O = phosphite(in) + ADP + phosphate + H(+). Part of the ABC transporter complex PtxABC involved in phosphite import. Responsible for energy coupling to the transport system. This chain is Phosphite import ATP-binding protein PxtA (ptxA), found in Stutzerimonas stutzeri (Pseudomonas stutzeri).